Here is a 188-residue protein sequence, read N- to C-terminus: uncharacterized protein (188 aa).

The signal sequence occupies residues 1 to 23 (MVRPKLAFYILPLLLAFLGSALG). Residue Asn74 is glycosylated (N-linked (GlcNAc...) asparagine).

This is an uncharacterized protein from Mus musculus (Mouse).